Reading from the N-terminus, the 290-residue chain is Bifunctional protein FolD (290 aa).

NADP(+)-binding positions include 165–167 (GRG), S194, and I235.

It belongs to the tetrahydrofolate dehydrogenase/cyclohydrolase family. As to quaternary structure, homodimer.

It carries out the reaction (6R)-5,10-methylene-5,6,7,8-tetrahydrofolate + NADP(+) = (6R)-5,10-methenyltetrahydrofolate + NADPH. It catalyses the reaction (6R)-5,10-methenyltetrahydrofolate + H2O = (6R)-10-formyltetrahydrofolate + H(+). Its pathway is one-carbon metabolism; tetrahydrofolate interconversion. Functionally, catalyzes the oxidation of 5,10-methylenetetrahydrofolate to 5,10-methenyltetrahydrofolate and then the hydrolysis of 5,10-methenyltetrahydrofolate to 10-formyltetrahydrofolate. The sequence is that of Bifunctional protein FolD from Syntrophotalea carbinolica (strain DSM 2380 / NBRC 103641 / GraBd1) (Pelobacter carbinolicus).